We begin with the raw amino-acid sequence, 396 residues long: Probable protein phosphatase 2C 25 (396 aa).

A disordered region spans residues 32–98 (ESLSLTLSHR…SPPGGVLKRK (67 aa)). The segment covering 44 to 61 (QTSSPSSPSTTVSSPKSP) has biased composition (low complexity). One can recognise a PPM-type phosphatase domain in the interval 139 to 392 (GYSVYCKRGR…DDISVMLIPL (254 aa)). Mn(2+)-binding residues include Asp-175, Gly-176, Asp-338, and Asp-383.

Belongs to the PP2C family. As to quaternary structure, interacts with MPK4 and MPK6. Mg(2+) serves as cofactor. The cofactor is Mn(2+).

Its subcellular location is the cytoplasm. The protein localises to the nucleus. The enzyme catalyses O-phospho-L-seryl-[protein] + H2O = L-seryl-[protein] + phosphate. It carries out the reaction O-phospho-L-threonyl-[protein] + H2O = L-threonyl-[protein] + phosphate. Its function is as follows. Protein phosphatase that negatively regulates defense respones. Inactivates MPK4 and MPK6 MAP kinases involved in stress and defense signaling. The chain is Probable protein phosphatase 2C 25 from Arabidopsis thaliana (Mouse-ear cress).